Reading from the N-terminus, the 143-residue chain is Nucleoside diphosphate kinase (143 aa).

Residues K11, F59, R87, T93, R104, and N114 each contribute to the ATP site. H117 functions as the Pros-phosphohistidine intermediate in the catalytic mechanism.

This sequence belongs to the NDK family. In terms of assembly, homotetramer. Mg(2+) is required as a cofactor.

It is found in the cytoplasm. The enzyme catalyses dZDP + ATP = dZTP + ADP. The catalysed reaction is a 2'-deoxyribonucleoside 5'-diphosphate + ATP = a 2'-deoxyribonucleoside 5'-triphosphate + ADP. It carries out the reaction a ribonucleoside 5'-diphosphate + ATP = a ribonucleoside 5'-triphosphate + ADP. It participates in purine metabolism. In terms of biological role, major role in the synthesis of nucleoside triphosphates other than ATP. The ATP gamma phosphate is transferred to the NDP beta phosphate via a ping-pong mechanism, using a phosphorylated active-site intermediate. Its function is as follows. (Microbial infection) Catalyzes the phosphorylation of dZDP to dZTP, when the bacterium is infected by a phage that produces the substrate for the synthesis of dZTP (2- amino-2'-deoxyadenosine 5'-triphosphate), which is then used by the phage as a DNA polymerase substrate. The protein is Nucleoside diphosphate kinase of Acinetobacter baumannii (strain AB307-0294).